Reading from the N-terminus, the 317-residue chain is 2-keto-3-deoxygluconate permease 1 (317 aa).

The next 10 membrane-spanning stretches (helical) occupy residues 10–30 (VPGGMMVVPLVIGAVINTFAP), 47–67 (AAPLIGAFLLCMGAGISVKAA), 82–102 (LLVAIGIGLGVEHLFGAEGIF), 106–126 (GVAIIAAMSNSNGGLYAALVG), 134–154 (VGAISILSLNDGPFFTMIALG), 159–179 (ANIPIMALVAVLVPLVVGMIL), 195–215 (PLLIPFFAFALGAGINLEMLL), 217–237 (GGLAGILLGVLTTFVGGFFNI), 248–268 (IAGAAASSTAGNAVATPLAIA), and 279–299 (AAAAPLIAASVITTAILTPVL).

This sequence belongs to the KdgT transporter family.

The protein resides in the cell inner membrane. It carries out the reaction 2-dehydro-3-deoxy-D-gluconate(in) + H(+)(in) = 2-dehydro-3-deoxy-D-gluconate(out) + H(+)(out). Its function is as follows. Catalyzes the proton-dependent uptake of 2-keto-3-deoxygluconate (KDG) into the cell. This Salmonella typhi protein is 2-keto-3-deoxygluconate permease 1.